A 485-amino-acid polypeptide reads, in one-letter code: Glutamyl-tRNA(Gln) amidotransferase subunit A (485 aa).

Active-site charge relay system residues include K78 and S153. S177 (acyl-ester intermediate) is an active-site residue.

It belongs to the amidase family. GatA subfamily. In terms of assembly, heterotrimer of A, B and C subunits.

It catalyses the reaction L-glutamyl-tRNA(Gln) + L-glutamine + ATP + H2O = L-glutaminyl-tRNA(Gln) + L-glutamate + ADP + phosphate + H(+). Its function is as follows. Allows the formation of correctly charged Gln-tRNA(Gln) through the transamidation of misacylated Glu-tRNA(Gln) in organisms which lack glutaminyl-tRNA synthetase. The reaction takes place in the presence of glutamine and ATP through an activated gamma-phospho-Glu-tRNA(Gln). This chain is Glutamyl-tRNA(Gln) amidotransferase subunit A, found in Bacillus mycoides (strain KBAB4) (Bacillus weihenstephanensis).